A 238-amino-acid chain; its full sequence is Small ribosomal subunit protein uS3 (238 aa).

Positions 39–107 constitute a KH type-2 domain; the sequence is MREFIHDYAK…ELHLNIVEIR (69 aa). The span at 212–222 shows a compositional bias: basic and acidic residues; the sequence is PQAHDRRHSEA. A disordered region spans residues 212–238; the sequence is PQAHDRRHSEAQEGAAPRPPRRDRERA.

The protein belongs to the universal ribosomal protein uS3 family. As to quaternary structure, part of the 30S ribosomal subunit. Forms a tight complex with proteins S10 and S14.

Functionally, binds the lower part of the 30S subunit head. Binds mRNA in the 70S ribosome, positioning it for translation. In Cereibacter sphaeroides (strain ATCC 17025 / ATH 2.4.3) (Rhodobacter sphaeroides), this protein is Small ribosomal subunit protein uS3.